Consider the following 373-residue polypeptide: tRNA-specific 2-thiouridylase MnmA (373 aa).

ATP-binding positions include 12-19 (GMSGGVDS) and Met-38. The interaction with target base in tRNA stretch occupies residues 98-100 (NPD). The Nucleophile role is filled by Cys-103. Cys-103 and Cys-200 form a disulfide bridge. Residue Gly-127 coordinates ATP. The tract at residues 150 to 152 (KDQ) is interaction with tRNA. Cys-200 functions as the Cysteine persulfide intermediate in the catalytic mechanism. The interval 312–313 (RY) is interaction with tRNA.

It belongs to the MnmA/TRMU family.

It localises to the cytoplasm. The catalysed reaction is S-sulfanyl-L-cysteinyl-[protein] + uridine(34) in tRNA + AH2 + ATP = 2-thiouridine(34) in tRNA + L-cysteinyl-[protein] + A + AMP + diphosphate + H(+). In terms of biological role, catalyzes the 2-thiolation of uridine at the wobble position (U34) of tRNA, leading to the formation of s(2)U34. This Streptococcus uberis (strain ATCC BAA-854 / 0140J) protein is tRNA-specific 2-thiouridylase MnmA.